The primary structure comprises 1494 residues: Serine/threonine-protein kinase VPS15 (1494 aa).

G2 carries the N-myristoyl glycine lipid modification. The 281-residue stretch at 27–307 folds into the Protein kinase domain; the sequence is LVLKEVLGRG…VFPNYFSPFL (281 aa). ATP contacts are provided by residues 33-41 and K54; that span reads LGRGRFLKS. D149 functions as the Proton acceptor in the catalytic mechanism. 7 HEAT repeats span residues 383–421, 480–517, 524–562, 610–646, 648–685, 687–724, and 727–764; these read NSKD…LYDS, DRLQ…LVRD, KIFP…TAYG, KTIA…FFGQ, QSND…FVGQ, SVEE…SSFL, and RALL…CLGA. Disordered stretches follow at residues 859 to 903 and 1037 to 1064; these read QSVE…TVEL and SASV…SVPD. The span at 1037–1047 shows a compositional bias: low complexity; that stretch reads SASVTSEDASS. 7 WD repeats span residues 1079–1118, 1127–1166, 1184–1226, 1231–1270, 1276–1323, 1371–1409, and 1466–1494; these read EHRS…KDIS, LEGS…RGLG, KEGA…DAWT, PEEG…PVNS, ICPI…CHQV, PRLP…RSYC, and DSVQ…KVWK.

The protein belongs to the protein kinase superfamily. Ser/Thr protein kinase family. In terms of assembly, interacts with VPS34. Component of a complex made of VPS38/USL1 and PI3K main subunits such as VPS15, ATG6/VPS30 and VPS34. Autophosphorylated. Mainly expressed in anthers, pollen grains and pollen tubes, and, to a lower extent, in other tissues and organs including seedlings, roots, stems, leaves, flowers, pitils and siliques.

It localises to the cytoplasm. It is found in the golgi apparatus. The protein localises to the trans-Golgi network membrane. The protein resides in the endosome membrane. The catalysed reaction is L-seryl-[protein] + ATP = O-phospho-L-seryl-[protein] + ADP + H(+). It carries out the reaction L-threonyl-[protein] + ATP = O-phospho-L-threonyl-[protein] + ADP + H(+). In terms of biological role, serine/threonine-protein kinase required for cytoplasm to vacuole transport (Cvt) and autophagy as a part of the autophagy-specific VPS34 PI3-kinase complex I. Required for pollen development and germination, probably via the modulation of phosphatidylinositol 3-phosphate (PI3P) formation and vacuolar organization. This Arabidopsis thaliana (Mouse-ear cress) protein is Serine/threonine-protein kinase VPS15.